Reading from the N-terminus, the 490-residue chain is 3-octaprenyl-4-hydroxybenzoate carboxy-lyase (490 aa).

Residue N172 coordinates Mn(2+). Residues 175 to 177, 189 to 191, and 194 to 195 each bind prenylated FMN; these read IYR, RWL, and RG. E238 is a Mn(2+) binding site. The active-site Proton donor is D287.

This sequence belongs to the UbiD family. Homohexamer. Prenylated FMN is required as a cofactor. Mn(2+) serves as cofactor.

Its subcellular location is the cell membrane. The catalysed reaction is a 4-hydroxy-3-(all-trans-polyprenyl)benzoate + H(+) = a 2-(all-trans-polyprenyl)phenol + CO2. It functions in the pathway cofactor biosynthesis; ubiquinone biosynthesis. Functionally, catalyzes the decarboxylation of 3-octaprenyl-4-hydroxy benzoate to 2-octaprenylphenol, an intermediate step in ubiquinone biosynthesis. The polypeptide is 3-octaprenyl-4-hydroxybenzoate carboxy-lyase (Idiomarina loihiensis (strain ATCC BAA-735 / DSM 15497 / L2-TR)).